We begin with the raw amino-acid sequence, 401 residues long: Deoxyhypusine synthase-like protein (401 aa).

This sequence belongs to the deoxyhypusine synthase family.

The polypeptide is Deoxyhypusine synthase-like protein (Thermosynechococcus vestitus (strain NIES-2133 / IAM M-273 / BP-1)).